The following is a 71-amino-acid chain: Exodeoxyribonuclease 7 small subunit (71 aa).

This sequence belongs to the XseB family. In terms of assembly, heterooligomer composed of large and small subunits.

It localises to the cytoplasm. The catalysed reaction is Exonucleolytic cleavage in either 5'- to 3'- or 3'- to 5'-direction to yield nucleoside 5'-phosphates.. In terms of biological role, bidirectionally degrades single-stranded DNA into large acid-insoluble oligonucleotides, which are then degraded further into small acid-soluble oligonucleotides. The protein is Exodeoxyribonuclease 7 small subunit of Endomicrobium trichonymphae.